The sequence spans 320 residues: Acetyl-coenzyme A carboxylase carboxyl transferase subunit alpha (320 aa).

The region spanning 33-294 is the CoA carboxyltransferase C-terminal domain; sequence AFDGEIESLR…GDAVEEELKA (262 aa).

It belongs to the AccA family. In terms of assembly, acetyl-CoA carboxylase is a heterohexamer composed of biotin carboxyl carrier protein (AccB), biotin carboxylase (AccC) and two subunits each of ACCase subunit alpha (AccA) and ACCase subunit beta (AccD).

The protein resides in the cytoplasm. It carries out the reaction N(6)-carboxybiotinyl-L-lysyl-[protein] + acetyl-CoA = N(6)-biotinyl-L-lysyl-[protein] + malonyl-CoA. The protein operates within lipid metabolism; malonyl-CoA biosynthesis; malonyl-CoA from acetyl-CoA: step 1/1. In terms of biological role, component of the acetyl coenzyme A carboxylase (ACC) complex. First, biotin carboxylase catalyzes the carboxylation of biotin on its carrier protein (BCCP) and then the CO(2) group is transferred by the carboxyltransferase to acetyl-CoA to form malonyl-CoA. This chain is Acetyl-coenzyme A carboxylase carboxyl transferase subunit alpha, found in Phenylobacterium zucineum (strain HLK1).